We begin with the raw amino-acid sequence, 440 residues long: Sequestosome-1 (440 aa).

Alanine 2 bears the N-acetylalanine mark. Residues 2–50 (ASLTVKAYLLGKEDAAREIRRFSFCCSPEPEAEAEAAAGPGPCERLLSR) form an interaction with LCK region. Residues 3-102 (SLTVKAYLLG…DIFRIYIKEK (100 aa)) enclose the PB1 domain. A Phosphoserine modification is found at serine 24. Residues 43–107 (PCERLLSRVA…YIKEKKECRR (65 aa)) form an interaction with PRKCZ and dimerization region. Residues 50-80 (RVAALFPALRPGGFQAHYRDEDGDLVAFSSD) form an interaction with PAWR region. Residue lysine 91 forms a Glycyl lysine isopeptide (Lys-Gly) (interchain with G-Cter in ubiquitin) linkage. The segment at 122–224 (VHPNVICDGC…EARPGPTAES (103 aa)) is interaction with GABRR3. A ZZ-type zinc finger spans residues 123 to 173 (HPNVICDGCNGPVVGTRYKCSVCPDYDLCSVCEGKGLHRGHTKLAFPSPFG). Zn(2+) contacts are provided by cysteine 128, cysteine 131, cysteine 142, and cysteine 145. Position 148 is a phosphotyrosine (tyrosine 148). Residues cysteine 151, cysteine 154, histidine 160, and histidine 163 each coordinate Zn(2+). Phosphoserine is present on residues serine 170 and serine 176. The interval 170 to 220 (SPFGHLSEGFSHSRWLRKVKHGHFGWPGWEMGPPGNWSPRPPRAGEARPGP) is LIM protein-binding (LB). Lysine 189 participates in a covalent cross-link: Glycyl lysine isopeptide (Lys-Gly) (interchain with G-Cter in ubiquitin). The segment at 196 to 235 (PGWEMGPPGNWSPRPPRAGEARPGPTAESASGPSEDPSVN) is disordered. Phosphoserine is present on residues serine 207, serine 233, serine 249, and serine 266. The TRAF6-binding signature appears at 228-233 (PSEDPS). Residues 264–390 (KRSRLTPVSP…ALYPHLPPEA (127 aa)) are disordered. At threonine 269 the chain carries Phosphothreonine. Residues 269 to 440 (TPVSPESSST…IQYSKHPPPL (172 aa)) are interaction with NTRK1. A phosphoserine mark is found at serine 272 and serine 282. Positions 283–296 (SSQPSSCCSDPSKP) are enriched in low complexity. 2 S-palmitoyl cysteine lipidation sites follow: cysteine 289 and cysteine 290. Phosphoserine is present on serine 306. Over residues 310–324 (QMRKIALESEGRPEE) the composition is skewed to basic and acidic residues. The MAP1LC3B-binding stretch occupies residues 321–342 (RPEEQMESDNCSGGDDDWTHLS). A phosphoserine mark is found at serine 328 and serine 332. Residues 336–341 (DDWTHL) carry the LIR motif. Residues 337–347 (DWTHLSSKEVD) are compositionally biased toward basic and acidic residues. The interval 347 to 352 (DPSTGE) is interaction with KEAP1. Position 349 is a phosphoserine; by ULK1 (serine 349). A compositionally biased stretch (polar residues) spans 351–373 (GELQSLQMPESEGPSSLDPSQEG). A phosphoserine mark is found at serine 355, serine 361, serine 365, and serine 366. Positions 389–434 (EADPRLIESLSQMLSMGFSDEGGWLTRLLQTKNYDIGAALDTIQYS) constitute a UBA domain. At serine 403 the chain carries Phosphoserine; by CK2, ULK1 and TBK1. Serine 407 carries the post-translational modification Phosphoserine; by ULK1. Residues lysine 420 and lysine 435 each carry the N6-acetyllysine; alternate modification. Lysine 420 participates in a covalent cross-link: Glycyl lysine isopeptide (Lys-Gly) (interchain with G-Cter in ubiquitin); alternate. Lysine 435 participates in a covalent cross-link: Glycyl lysine isopeptide (Lys-Gly) (interchain with G-Cter in SUMO2); alternate.

As to quaternary structure, homooligomer or heterooligomer; may form homotypic arrays. Dimerization interferes with ubiquitin binding. Component of a ternary complex with PAWR and PRKCZ. Forms a complex with JUB/Ajuba, PRKCZ and TRAF6. Identified in a complex with TRAF6 and CYLD. Identified in a heterotrimeric complex with ubiquitin and ZFAND5, where ZFAND5 and SQSTM1 both interact with the same ubiquitin molecule. Interacts (via LIR motif) with MAP1LC3A and MAP1LC3B, as well as with other ATG8 family members, including GABARAP, GABARAPL1 and GABARAPL2; these interactions are necessary for the recruitment MAP1 LC3 family members to inclusion bodies containing polyubiquitinated protein aggregates and for their degradation by autophagy. Interacts directly with PRKCI and PRKCZ. Interacts with EBI3, LCK, RASA1, NR2F2, NTRK1, NTRK2, NTRK3, NBR1, MAP2K5 and MAPKAPK5. Upon TNF-alpha stimulation, interacts with RIPK1 probably bridging IKBKB to the TNF-R1 complex composed of TNF-R1/TNFRSF1A, TRADD and RIPK1. Interacts with the proteasome subunits PSMD4 and PSMC2. Interacts with TRAF6. Interacts with 'Lys-63'-linked polyubiquitinated MAPT/TAU. Interacts with FHOD3. Interacts with CYLD. Interacts with SESN1. Interacts with SESN2. Interacts with ULK1. Interacts with UBD. Interacts with WDR81; the interaction is direct and regulates the interaction of SQSTM1 with ubiquitinated proteins. Interacts with WDFY3; this interaction is required to recruit WDFY3 to cytoplasmic bodies and to PML bodies. Interacts with LRRC25. Interacts with STING1; leading to relocalization of STING1 to autophagosomes. Interacts (when phosphorylated at Ser-349) with KEAP1; the interaction is direct and inactivates the BCR(KEAP1) complex by sequestering KEAP1 in inclusion bodies, promoting its degradation. Interacts with MOAP1; promoting dissociation of SQSTM1 inclusion bodies that sequester KEAP1. Interacts with GBP1. Interacts with TAX1BP1. Interacts with (ubiquitinated) PEX5; specifically binds PEX5 ubiquitinated at 'Lys-209' in response to reactive oxygen species (ROS). Interacts (via PB1 domain) with TNS2; the interaction leads to sequestration of TNS2 in cytoplasmic aggregates with SQSTM1 and promotes TNS2 ubiquitination and proteasomal degradation. Interacts with IRS1; the interaction is disrupted by the presence of tensin TNS2. Interacts with TRIM5. Interacts with TRIM11 (when ubiquitinated); promoting AIM2 recruitment to autophagosomes and autophagy-dependent degradation of AIM2. Interacts with TRIM13. Interacts with TRIM16. Interacts with TRIM23. Interacts with TRIM50. Interacts with TRIM55. Interacts with ECSIT; this interaction inhibits TLR4 signaling via functional regulation of the TRAF6-ECSIT complex. Interacts with GABRR1, GABRR2 and GABRR3. Interacts with WDR83. Interacts with GRB2. Interacts with USP12; the interaction is independent of USP12 deubiquitinase activity and may be involved in regulation of autophagic flux. Interacts with ASB6. In terms of processing, phosphorylation at Ser-407 by ULK1 destabilizes the UBA dimer interface and increases binding affinity to ubiquitinated proteins. Phosphorylation at Ser-407 also primes for subsequent phosphorylation at Ser-403. Phosphorylation at Ser-403 by CK2 or ULK1 promotes binding to ubiquitinated proteins by increasing the affinity between the UBA domain and polyubiquitin chains. Phosphorylation at Ser-403 by ULK1 is stimulated by SESN2. Phosphorylated at Ser-403 by TBK1, leading to promote relocalization of 'Lys-63'-linked ubiquitinated STING1 to autophagosomes. Phosphorylation at Ser-349 by ULK1 promotes interaction with KEAP1 and inactivation of the BCR(KEAP1) complex, promoting NFE2L2/NRF2 nuclear accumulation and expression of phase II detoxifying enzymes. Phosphorylated in vitro by TTN. Ubiquitinated by UBE2J1 and RNF26 at Lys-435: ubiquitinated SQSTM1 attracts specific vesicle-associated adapters, forming a molecular bridge that restrains cognate vesicles in the perinuclear region and organizes the endosomal pathway for efficient cargo transport. Ubiquitination by UBE2D2 and UBE2D3 increases its ability to bind polyubiquitin chains by destabilizing the UBA dimer interface. Deubiquitination by USP15 releases target vesicles for fast transport into the cell periphery. Ubiquitinated by the BCR(KEAP1) complex at Lys-420, increasing SQSTM1 sequestering activity and promoting its degradation. Ubiquitinated via 'Lys-29' and 'Lys-33'-linked polyubiquitination leading to xenophagic targeting of bacteria and inhibition of their replication. Post-translationally, acetylated at Lys-420 and Lys-435 by KAT5/TIP60, promotes activity by destabilizing the UBA dimer interface and increases binding affinity to ubiquitinated proteins. Deacetylated by HDAC6. In terms of processing, palmitoylation at Cys-289 and Cys-290 by ZDHHC19 is required for efficient autophagic degradation of SQSTM1-cargo complexes by promoting affinity for ATG8 proteins and recruitment of p62 bodies to autophagosomes. Dealmitoylated at Cys-289 and Cys-290 by LYPLA1. (Microbial infection) Cleaved by S.pyogenes SpeB protease; leading to its degradation. Degradation by SpeB prevents autophagy, promoting to S.pyogenes intracellular replication. Post-translationally, (Microbial infection) Deubiquitinated by Epstein-Barr virus BPLF1; leading to inhibition of the recruitment of MAP1LC3A/LC3 to SQSTM1-positive structures. Ubiquitously expressed.

The protein resides in the cytoplasmic vesicle. It is found in the autophagosome. Its subcellular location is the preautophagosomal structure. It localises to the cytoplasm. The protein localises to the cytosol. The protein resides in the nucleus. It is found in the PML body. Its subcellular location is the late endosome. It localises to the lysosome. The protein localises to the endoplasmic reticulum. The protein resides in the myofibril. It is found in the sarcomere. Molecular adapter required for selective macroautophagy (aggrephagy) by acting as a bridge between polyubiquitinated proteins and autophagosomes. Promotes the recruitment of ubiquitinated cargo proteins to autophagosomes via multiple domains that bridge proteins and organelles in different steps. SQSTM1 first mediates the assembly and removal of ubiquitinated proteins by undergoing liquid-liquid phase separation upon binding to ubiquitinated proteins via its UBA domain, leading to the formation of insoluble cytoplasmic inclusions, known as p62 bodies. SQSTM1 then interacts with ATG8 family proteins on autophagosomes via its LIR motif, leading to p62 body recruitment to autophagosomes, followed by autophagic clearance of ubiquitinated proteins. SQSTM1 is itself degraded along with its ubiquitinated cargos. Also required to recruit ubiquitinated proteins to PML bodies in the nucleus. Also involved in autophagy of peroxisomes (pexophagy) in response to reactive oxygen species (ROS) by acting as a bridge between ubiquitinated PEX5 receptor and autophagosomes. Acts as an activator of the NFE2L2/NRF2 pathway via interaction with KEAP1: interaction inactivates the BCR(KEAP1) complex by sequestering the complex in inclusion bodies, promoting nuclear accumulation of NFE2L2/NRF2 and subsequent expression of cytoprotective genes. Promotes relocalization of 'Lys-63'-linked ubiquitinated STING1 to autophagosomes. Involved in endosome organization by retaining vesicles in the perinuclear cloud: following ubiquitination by RNF26, attracts specific vesicle-associated adapters, forming a molecular bridge that restrains cognate vesicles in the perinuclear region and organizes the endosomal pathway for efficient cargo transport. Sequesters tensin TNS2 into cytoplasmic puncta, promoting TNS2 ubiquitination and proteasomal degradation. May regulate the activation of NFKB1 by TNF-alpha, nerve growth factor (NGF) and interleukin-1. May play a role in titin/TTN downstream signaling in muscle cells. Adapter that mediates the interaction between TRAF6 and CYLD. In Homo sapiens (Human), this protein is Sequestosome-1.